The primary structure comprises 496 residues: Glutamyl-tRNA(Gln) amidotransferase subunit A, mitochondrial (496 aa).

Catalysis depends on charge relay system residues Lys-80 and Ser-161. Residue Ser-185 is the Acyl-ester intermediate of the active site.

This sequence belongs to the amidase family. GatA subfamily. Subunit of the heterotrimeric GatCAB amidotransferase (AdT) complex, composed of A, B and C subunits.

The protein resides in the mitochondrion. It carries out the reaction L-glutamyl-tRNA(Gln) + L-glutamine + ATP + H2O = L-glutaminyl-tRNA(Gln) + L-glutamate + ADP + phosphate + H(+). Its function is as follows. Allows the formation of correctly charged Gln-tRNA(Gln) through the transamidation of misacylated Glu-tRNA(Gln) in the mitochondria. The reaction takes place in the presence of glutamine and ATP through an activated gamma-phospho-Glu-tRNA(Gln). The sequence is that of Glutamyl-tRNA(Gln) amidotransferase subunit A, mitochondrial from Culex quinquefasciatus (Southern house mosquito).